The chain runs to 414 residues: Serine/threonine transporter SstT (414 aa).

8 consecutive transmembrane segments (helical) span residues 16 to 36 (GSLV…AWIS), 46 to 66 (LGTL…LMLV), 84 to 104 (ILFL…VFSF), 143 to 163 (ALLN…GFAL), 180 to 200 (AVTF…FGLV), 219 to 239 (LVVL…LLVF), 300 to 320 (MAGA…TLGV), and 332 to 352 (VVAS…LLLI).

The protein belongs to the dicarboxylate/amino acid:cation symporter (DAACS) (TC 2.A.23) family.

It is found in the cell inner membrane. The enzyme catalyses L-serine(in) + Na(+)(in) = L-serine(out) + Na(+)(out). It carries out the reaction L-threonine(in) + Na(+)(in) = L-threonine(out) + Na(+)(out). Functionally, involved in the import of serine and threonine into the cell, with the concomitant import of sodium (symport system). This chain is Serine/threonine transporter SstT, found in Salmonella agona (strain SL483).